The chain runs to 573 residues: Poly(ribitol-phosphate) beta-N-acetylglucosaminyltransferase TarS (573 aa).

UDP-N-acetyl-alpha-D-glucosamine is bound by residues Pro-9, Asp-41, Asn-68, Arg-76, 92–94 (DSD), Arg-127, and Glu-178. Asp-94 provides a ligand contact to Mn(2+). Asp-179 (proton acceptor) is an active-site residue. Residues Arg-207 and 211–213 (HMS) each bind UDP-N-acetyl-alpha-D-glucosamine.

Belongs to the glycosyltransferase 2 family. As to quaternary structure, homotrimer. It depends on Mn(2+) as a cofactor.

It catalyses the reaction 4-O-[(D-ribitylphospho)(n)-di{(2R)-glycerylphospho}]-N-acetyl-beta-D-mannosaminyl-(1-&gt;4)-N-acetyl-alpha-D-glucosaminyl di-trans,octa-cis-undecaprenyl diphosphate + n UDP-N-acetyl-alpha-D-glucosamine = 4-O-([2-N-acetyl-beta-D-glucosaminyl-1-D-ribitylphospho](n)-di{[2R]-1-glycerylphospho})-N-acetyl-beta-D-mannosaminyl-(1-&gt;4)-N-acetyl-alpha-D-glucosaminyl di-trans,octa-cis-undecaprenyl diphosphate + n UDP + n H(+). Its pathway is cell wall biogenesis; poly(ribitol phosphate) teichoic acid biosynthesis. Attaches beta-O-GlcNAc (beta-O-N-acetyl-D-glucosamine) residues to the C4 position of poly(RboP)-wall teichoic acids (WTAs). Mediates beta-lactam resistance in methicillin resistant Staphylococcus aureus (MRSA) strains. This chain is Poly(ribitol-phosphate) beta-N-acetylglucosaminyltransferase TarS, found in Staphylococcus aureus (strain Mu50 / ATCC 700699).